The primary structure comprises 418 residues: 6-methylpretetramide 4-monooxygenase (418 aa).

FAD is bound by residues 15-44 (DVCV…LVER) and 289-299 (WARDGLLLIGD).

This sequence belongs to the PheA/TfdB FAD monooxygenase family. The cofactor is FAD.

It catalyses the reaction 6-methylpretetramide + NADPH + O2 + 2 H(+) = 4-hydroxy-6-methylpretetramide + NADP(+) + H2O. It participates in antibiotic biosynthesis; oxytetracycline biosynthesis. Involved in the biosynthesis of the tetracycline antibiotic, oxytetracycline. Catalyzes the C-4 hydroxylation of 6-methylpretetramide to yield the intermediate 4-hydroxyl-6-methylpretetramid, which is subsequently hydroxylated by OxyL to yield 4-keto-anhydrotetracycline. OxyE serves as the ancillary enzyme to assist OxyL in the hydroxylation of C-4. The sequence is that of 6-methylpretetramide 4-monooxygenase from Streptomyces rimosus.